A 99-amino-acid chain; its full sequence is Large ribosomal subunit protein uL23 (99 aa).

This sequence belongs to the universal ribosomal protein uL23 family. As to quaternary structure, part of the 50S ribosomal subunit. Contacts protein L29, and trigger factor when it is bound to the ribosome.

One of the early assembly proteins it binds 23S rRNA. One of the proteins that surrounds the polypeptide exit tunnel on the outside of the ribosome. Forms the main docking site for trigger factor binding to the ribosome. This is Large ribosomal subunit protein uL23 from Azotobacter vinelandii (strain DJ / ATCC BAA-1303).